The following is a 159-amino-acid chain: Ribonuclease H (159 aa).

The region spanning 1-145 (MTHIRAIYTD…CDLIARRLSR (145 aa)) is the RNase H type-1 domain. Asp-10, Glu-49, Asp-74, and Asp-137 together coordinate Mg(2+).

This sequence belongs to the RNase H family. Monomer. Mg(2+) is required as a cofactor.

The protein resides in the cytoplasm. It catalyses the reaction Endonucleolytic cleavage to 5'-phosphomonoester.. Functionally, endonuclease that specifically degrades the RNA of RNA-DNA hybrids. The chain is Ribonuclease H from Thermosynechococcus vestitus (strain NIES-2133 / IAM M-273 / BP-1).